A 330-amino-acid chain; its full sequence is Ketol-acid reductoisomerase (NADP(+)) (330 aa).

The region spanning 1-181 (MNVYYEQDAD…GGTKAGVIET (181 aa)) is the KARI N-terminal Rossmann domain. Residues 24–27 (YGSQ), Arg-47, Ser-50, Ser-52, and 82–85 (DQTQ) contribute to the NADP(+) site. The active site involves His-107. Gly-133 provides a ligand contact to NADP(+). The KARI C-terminal knotted domain maps to 182–327 (NFKDETETDL…AKLRNMMSWL (146 aa)). Residues Asp-190, Glu-194, Glu-226, and Glu-230 each coordinate Mg(2+). Residue Ser-251 coordinates substrate.

This sequence belongs to the ketol-acid reductoisomerase family. Requires Mg(2+) as cofactor.

The catalysed reaction is (2R)-2,3-dihydroxy-3-methylbutanoate + NADP(+) = (2S)-2-acetolactate + NADPH + H(+). It carries out the reaction (2R,3R)-2,3-dihydroxy-3-methylpentanoate + NADP(+) = (S)-2-ethyl-2-hydroxy-3-oxobutanoate + NADPH + H(+). The protein operates within amino-acid biosynthesis; L-isoleucine biosynthesis; L-isoleucine from 2-oxobutanoate: step 2/4. Its pathway is amino-acid biosynthesis; L-valine biosynthesis; L-valine from pyruvate: step 2/4. Involved in the biosynthesis of branched-chain amino acids (BCAA). Catalyzes an alkyl-migration followed by a ketol-acid reduction of (S)-2-acetolactate (S2AL) to yield (R)-2,3-dihydroxy-isovalerate. In the isomerase reaction, S2AL is rearranged via a Mg-dependent methyl migration to produce 3-hydroxy-3-methyl-2-ketobutyrate (HMKB). In the reductase reaction, this 2-ketoacid undergoes a metal-dependent reduction by NADPH to yield (R)-2,3-dihydroxy-isovalerate. In Chlorobium luteolum (strain DSM 273 / BCRC 81028 / 2530) (Pelodictyon luteolum), this protein is Ketol-acid reductoisomerase (NADP(+)).